A 416-amino-acid polypeptide reads, in one-letter code: Signal recognition particle receptor FtsY (416 aa).

Residues 1-10 (MFSFFRRKKK) are compositionally biased toward basic residues. Positions 1-24 (MFSFFRRKKKQETPALEEAQVQET) are disordered. GTP-binding positions include 224 to 231 (GINGAGKT), 304 to 308 (DTAGR), and 368 to 371 (TKLD).

This sequence belongs to the GTP-binding SRP family. FtsY subfamily. In terms of assembly, part of the signal recognition particle protein translocation system, which is composed of SRP and FtsY. SRP is a ribonucleoprotein composed of Ffh and a 4.5S RNA molecule. The cofactor is Mg(2+).

The protein resides in the cell membrane. Its subcellular location is the cytoplasm. It catalyses the reaction GTP + H2O = GDP + phosphate + H(+). Its function is as follows. Involved in targeting and insertion of nascent membrane proteins into the cytoplasmic membrane. Acts as a receptor for the complex formed by the signal recognition particle (SRP) and the ribosome-nascent chain (RNC). Interaction with SRP-RNC leads to the transfer of the RNC complex to the Sec translocase for insertion into the membrane, the hydrolysis of GTP by both Ffh and FtsY, and the dissociation of the SRP-FtsY complex into the individual components. The protein is Signal recognition particle receptor FtsY of Neisseria gonorrhoeae.